Consider the following 346-residue polypeptide: DNA-directed RNA polymerase subunit alpha (346 aa).

The alpha N-terminal domain (alpha-NTD) stretch occupies residues Met1–Glu233. The segment at Ile268 to Glu346 is alpha C-terminal domain (alpha-CTD).

The protein belongs to the RNA polymerase alpha chain family. As to quaternary structure, in plastids the minimal PEP RNA polymerase catalytic core is composed of four subunits: alpha, beta, beta', and beta''. When a (nuclear-encoded) sigma factor is associated with the core the holoenzyme is formed, which can initiate transcription.

The protein localises to the plastid. It localises to the chloroplast. It carries out the reaction RNA(n) + a ribonucleoside 5'-triphosphate = RNA(n+1) + diphosphate. DNA-dependent RNA polymerase catalyzes the transcription of DNA into RNA using the four ribonucleoside triphosphates as substrates. The chain is DNA-directed RNA polymerase subunit alpha from Ranunculus macranthus (Large buttercup).